A 145-amino-acid chain; its full sequence is Mitochondrial import receptor subunit TOM20 homolog (145 aa).

At 1–6 the chain is on the mitochondrial intermembrane side; that stretch reads MVGRNS. Residues 7–24 form a helical membrane-spanning segment; sequence AIAAGVCGALFIGYCIYF. At 25-145 the chain is on the cytoplasmic side; that stretch reads DRKRRSDPNF…AQSLAEDDVE (121 aa). Residues Lys-35, Lys-56, Lys-61, and Lys-68 each participate in a glycyl lysine isopeptide (Lys-Gly) (interchain with G-Cter in ubiquitin) cross-link. A phosphoserine mark is found at Ser-135 and Ser-138.

This sequence belongs to the Tom20 family. As to quaternary structure, forms part of the preprotein translocase complex of the outer mitochondrial membrane (TOM complex) which consists of at least 7 different proteins (TOMM5, TOMM6, TOMM7, TOMM20, TOMM22, TOMM40 and TOMM70). Interacts with TOM22. Interacts with APEX1. Interacts with TBC1D21. Upon mitochondrial depolarization, interacts with PINK1; the interaction is required for PINK1-TOM-TIM23 supercomplex formation which is critical for PINK1 stabilization at the outer mitochondrial membrane, kinase activation and downstream mitophagy. In terms of processing, ubiquitinated by PRKN during mitophagy, leading to its degradation and enhancement of mitophagy. Deubiquitinated by USP30.

It is found in the mitochondrion outer membrane. In terms of biological role, central component of the receptor complex responsible for the recognition and translocation of cytosolically synthesized mitochondrial preproteins. Together with TOM22 functions as the transit peptide receptor at the surface of the mitochondrion outer membrane and facilitates the movement of preproteins into the TOM40 translocation pore. Required for the translocation across the mitochondrial outer membrane of cytochrome P450 monooxygenases. The chain is Mitochondrial import receptor subunit TOM20 homolog (TOMM20) from Bos taurus (Bovine).